A 138-amino-acid chain; its full sequence is ATP synthase epsilon chain (138 aa).

This sequence belongs to the ATPase epsilon chain family. As to quaternary structure, F-type ATPases have 2 components, CF(1) - the catalytic core - and CF(0) - the membrane proton channel. CF(1) has five subunits: alpha(3), beta(3), gamma(1), delta(1), epsilon(1). CF(0) has three main subunits: a, b and c.

The protein resides in the cell membrane. In terms of biological role, produces ATP from ADP in the presence of a proton gradient across the membrane. The sequence is that of ATP synthase epsilon chain from Streptococcus uberis (strain ATCC BAA-854 / 0140J).